We begin with the raw amino-acid sequence, 1515 residues long: Glutamate synthase [NADPH] large chain (1515 aa).

Positions 1 to 36 (MTTELNQGEQFVADFRANAAALTTANAYNPEDEHDA) are excised as a propeptide. The For GATase activity role is filled by C37. A Glutamine amidotransferase type-2 domain is found at 37–432 (CGVGFIAAID…PGEMIAVDLQ (396 aa)). The interval 916–937 (AKSDSGEGGEDPARFRPDKNGD) is disordered. Over residues 926–936 (DPARFRPDKNG) the composition is skewed to basic and acidic residues. FMN is bound by residues 1085–1142 (LSEV…IMVR) and 1086–1142 (SEVH…IMVR). [3Fe-4S] cluster contacts are provided by C1138, C1144, and C1149.

Belongs to the glutamate synthase family. Aggregate of 4 catalytic active heterodimers, consisting of a large and a small subunit. [3Fe-4S] cluster is required as a cofactor. It depends on FAD as a cofactor. FMN serves as cofactor.

The catalysed reaction is 2 L-glutamate + NADP(+) = L-glutamine + 2-oxoglutarate + NADPH + H(+). Its pathway is amino-acid biosynthesis; L-glutamate biosynthesis via GLT pathway; L-glutamate from 2-oxoglutarate and L-glutamine (NADP(+) route): step 1/1. It participates in energy metabolism; nitrogen metabolism. In Azospirillum brasilense, this protein is Glutamate synthase [NADPH] large chain (gltB).